Here is a 520-residue protein sequence, read N- to C-terminus: Cholesterol side-chain cleavage enzyme, mitochondrial (520 aa).

A mitochondrion-targeting transit peptide spans 1-39 (MLARGLPLRSALVKACPPLLNTGREGWGHHRVGTGEGAG). The segment at 27 to 48 (WGHHRVGTGEGAGISTRTPRPY) is disordered. Cys461 lines the heme pocket.

Belongs to the cytochrome P450 family. In terms of assembly, interacts with FDX1/adrenodoxin. Requires heme as cofactor.

The protein localises to the mitochondrion inner membrane. It catalyses the reaction 6 reduced [adrenodoxin] + cholesterol + 3 O2 + 6 H(+) = 4-methylpentanal + pregnenolone + 6 oxidized [adrenodoxin] + 4 H2O. It carries out the reaction 2 reduced [adrenodoxin] + cholesterol + O2 + 2 H(+) = (22R)-hydroxycholesterol + 2 oxidized [adrenodoxin] + H2O. The enzyme catalyses (22R)-hydroxycholesterol + 2 reduced [adrenodoxin] + O2 + 2 H(+) = (20R,22R)-20,22-dihydroxycholesterol + 2 oxidized [adrenodoxin] + H2O. The catalysed reaction is (20R,22R)-20,22-dihydroxycholesterol + 2 reduced [adrenodoxin] + O2 + 2 H(+) = 4-methylpentanal + pregnenolone + 2 oxidized [adrenodoxin] + 2 H2O. It participates in lipid metabolism; C21-steroid hormone metabolism. The protein operates within steroid metabolism; cholesterol metabolism. Its function is as follows. A cytochrome P450 monooxygenase that catalyzes the side-chain hydroxylation and cleavage of cholesterol to pregnenolone, the precursor of most steroid hormones. Catalyzes three sequential oxidation reactions of cholesterol, namely the hydroxylation at C22 followed with the hydroxylation at C20 to yield 20R,22R-hydroxycholesterol that is further cleaved between C20 and C22 to yield the C21-steroid pregnenolone and 4-methylpentanal. Mechanistically, uses molecular oxygen inserting one oxygen atom into a substrate and reducing the second into a water molecule. Two electrons are provided by NADPH via a two-protein mitochondrial transfer system comprising flavoprotein FDXR (adrenodoxin/ferredoxin reductase) and nonheme iron-sulfur protein FDX1 or FDX2 (adrenodoxin/ferredoxin). This is Cholesterol side-chain cleavage enzyme, mitochondrial from Capra hircus (Goat).